The chain runs to 133 residues: Small ribosomal subunit protein uS9 (133 aa).

Residues 102–113 (KVEGYLSRDPRA) are compositionally biased toward basic and acidic residues. Positions 102–133 (KVEGYLSRDPRAKERRKYGLKKARKAPQFSKR) are disordered. Residues 114–133 (KERRKYGLKKARKAPQFSKR) show a composition bias toward basic residues.

The protein belongs to the universal ribosomal protein uS9 family.

The chain is Small ribosomal subunit protein uS9 from Gloeobacter violaceus (strain ATCC 29082 / PCC 7421).